The following is a 248-amino-acid chain: tRNA (guanine-N(1)-)-methyltransferase (248 aa).

S-adenosyl-L-methionine is bound by residues Gly-113 and 133-138; that span reads IGDYVL.

Belongs to the RNA methyltransferase TrmD family. In terms of assembly, homodimer.

The protein localises to the cytoplasm. It carries out the reaction guanosine(37) in tRNA + S-adenosyl-L-methionine = N(1)-methylguanosine(37) in tRNA + S-adenosyl-L-homocysteine + H(+). Its function is as follows. Specifically methylates guanosine-37 in various tRNAs. The protein is tRNA (guanine-N(1)-)-methyltransferase of Shewanella halifaxensis (strain HAW-EB4).